Reading from the N-terminus, the 102-residue chain is Small ribosomal subunit protein uS10 (102 aa).

This sequence belongs to the universal ribosomal protein uS10 family. In terms of assembly, part of the 30S ribosomal subunit.

Functionally, involved in the binding of tRNA to the ribosomes. This Mycoplasma capricolum subsp. capricolum (strain California kid / ATCC 27343 / NCTC 10154) protein is Small ribosomal subunit protein uS10.